A 327-amino-acid chain; its full sequence is Lipoyl synthase (327 aa).

Residues cysteine 66, cysteine 71, cysteine 77, cysteine 92, cysteine 96, cysteine 99, and serine 306 each contribute to the [4Fe-4S] cluster site. The Radical SAM core domain maps to 78-295 (FSKGTATFMI…EKEAYELGFS (218 aa)).

This sequence belongs to the radical SAM superfamily. Lipoyl synthase family. [4Fe-4S] cluster is required as a cofactor.

It localises to the cytoplasm. It carries out the reaction [[Fe-S] cluster scaffold protein carrying a second [4Fe-4S](2+) cluster] + N(6)-octanoyl-L-lysyl-[protein] + 2 oxidized [2Fe-2S]-[ferredoxin] + 2 S-adenosyl-L-methionine + 4 H(+) = [[Fe-S] cluster scaffold protein] + N(6)-[(R)-dihydrolipoyl]-L-lysyl-[protein] + 4 Fe(3+) + 2 hydrogen sulfide + 2 5'-deoxyadenosine + 2 L-methionine + 2 reduced [2Fe-2S]-[ferredoxin]. It participates in protein modification; protein lipoylation via endogenous pathway; protein N(6)-(lipoyl)lysine from octanoyl-[acyl-carrier-protein]: step 2/2. In terms of biological role, catalyzes the radical-mediated insertion of two sulfur atoms into the C-6 and C-8 positions of the octanoyl moiety bound to the lipoyl domains of lipoate-dependent enzymes, thereby converting the octanoylated domains into lipoylated derivatives. This chain is Lipoyl synthase, found in Neisseria meningitidis serogroup A / serotype 4A (strain DSM 15465 / Z2491).